A 119-amino-acid chain; its full sequence is NADH-quinone oxidoreductase subunit A (119 aa).

The next 3 membrane-spanning stretches (helical) occupy residues 7–27 (YPVL…VSIG), 63–83 (LVAI…PWGV), and 88–108 (IGWP…LGFA).

This sequence belongs to the complex I subunit 3 family. As to quaternary structure, NDH-1 is composed of 14 different subunits. Subunits NuoA, H, J, K, L, M, N constitute the membrane sector of the complex.

The protein resides in the cell inner membrane. The catalysed reaction is a quinone + NADH + 5 H(+)(in) = a quinol + NAD(+) + 4 H(+)(out). NDH-1 shuttles electrons from NADH, via FMN and iron-sulfur (Fe-S) centers, to quinones in the respiratory chain. The immediate electron acceptor for the enzyme in this species is believed to be ubiquinone. Couples the redox reaction to proton translocation (for every two electrons transferred, four hydrogen ions are translocated across the cytoplasmic membrane), and thus conserves the redox energy in a proton gradient. This Burkholderia mallei (strain NCTC 10247) protein is NADH-quinone oxidoreductase subunit A.